We begin with the raw amino-acid sequence, 361 residues long: Mitogen-activated protein kinase 1 (361 aa).

Residues 28 to 316 (YINLAYIGEG…VEAALAHPYL (289 aa)) form the Protein kinase domain. ATP-binding positions include 34-42 (IGEGAYGMV) and Lys-57. Asp-152 (proton acceptor) is an active-site residue. Residue Thr-188 is modified to Phosphothreonine. Residues 188-190 (TEY) carry the TXY motif. Residue Tyr-190 is modified to Phosphotyrosine.

Belongs to the protein kinase superfamily. CMGC Ser/Thr protein kinase family. MAP kinase subfamily. Interacts with CDK2AP2. Mg(2+) serves as cofactor. Post-translationally, dually phosphorylated on Thr-188 and Tyr-190, which activates the enzyme. As to expression, expressed in the central nervous system, kidney, liver, intestine and the hematopoietic system. Also found in heart, muscle, pancreas and lung.

It is found in the cytoplasm. The protein localises to the cytoskeleton. It localises to the microtubule organizing center. Its subcellular location is the centrosome. The protein resides in the spindle. The catalysed reaction is L-seryl-[protein] + ATP = O-phospho-L-seryl-[protein] + ADP + H(+). The enzyme catalyses L-threonyl-[protein] + ATP = O-phospho-L-threonyl-[protein] + ADP + H(+). Its activity is regulated as follows. Activated by tyrosine phosphorylation during the M phase of the meiotic cell cycle. Dephosphorylated and inactivated by DUSP1. Its function is as follows. Serine/threonine kinase which acts as an essential component of the MAP kinase signal transduction pathway. Plays an important role in the MAPK/ERK cascade. Depending on the cellular context, this cascade mediates diverse biological functions such as cell growth, adhesion, survival and differentiation through the regulation of transcription, translation, cytoskeletal rearrangements. The MAPK/ERK cascade also plays a role in initiation and regulation of meiosis, mitosis, and postmitotic functions in differentiated cells by phosphorylating a number of transcription factors. Many of the substrates are localized in the nucleus, and seem to participate in the regulation of transcription upon stimulation. However, other substrates are found in the cytosol as well as in other cellular organelles, and those are responsible for processes such as translation, mitosis and apoptosis. Moreover, the MAPK/ERK cascade is also involved in the regulation of the endosomal dynamics, including lysosome processing and endosome cycling through the perinuclear recycling compartment (PNRC); as well as in the fragmentation of the Golgi apparatus during mitosis. Phosphorylates microtubule-associated protein 2 (MAP2), myelin basic protein (MBP) and Elk-1. Phosphorylates dual specificity protein phosphatase 1 (DUSP1) during meiosis, increasing its stability. Activated by M phase promoting factor (MPF). Plays a role in the spindle assembly checkpoint. The polypeptide is Mitogen-activated protein kinase 1 (mapk1) (Xenopus laevis (African clawed frog)).